Reading from the N-terminus, the 260-residue chain is Universal stress protein PHOS34 (260 aa).

The N-terminal 33 residues, 1–33, are a transit peptide targeting the chloroplast; that stretch reads MNPDSDYPHLPNIKIHHPSSPRHSHHHSSSTPS. The segment at 1 to 42 is disordered; it reads MNPDSDYPHLPNIKIHHPSSPRHSHHHSSSTPSAATPTPTAG. Basic residues predominate over residues 14-28; sequence KIHHPSSPRHSHHHS. Position 18 (P18) interacts with ATP. At S20 the chain carries Phosphoserine; by MAPK3 and MAPK6. A compositionally biased stretch (low complexity) spans 29 to 41; sequence SSTPSAATPTPTA. Residue V80 participates in ATP binding. The interval 92 to 118 is disordered; the sequence is GPLPLQTPPPPSAATDPGAQPKPSQED. ATP contacts are provided by residues 170–179 and 187–189; these read GSRGFGAEKR and SVS. A disordered region spans residues 209-260; it reads RDGPAPPGNVGATREAIVTVKSRRDDDDDDDEDHEAKIAAAASDHHEHIKDE. The residue at position 230 (S230) is a Phosphoserine. Over residues 251 to 260 the composition is skewed to basic and acidic residues; it reads SDHHEHIKDE.

It belongs to the universal stress protein A family. Post-translationally, phosphorylated by MAPK3 and MAPK6 after pathogenic elicitation (e.g. bacterial flg22, Phytophthora infestans zoospores and xylanase).

Its subcellular location is the plastid. It localises to the chloroplast. The polypeptide is Universal stress protein PHOS34 (Arabidopsis thaliana (Mouse-ear cress)).